A 265-amino-acid chain; its full sequence is Octanoyltransferase (265 aa).

A BPL/LPL catalytic domain is found at Asp-35–Glu-254. Substrate is bound by residues Arg-73 to His-80, Ala-184 to Gly-186, and Gly-197 to Ala-199. Cys-215 (acyl-thioester intermediate) is an active-site residue.

This sequence belongs to the LipB family.

It localises to the cytoplasm. The enzyme catalyses octanoyl-[ACP] + L-lysyl-[protein] = N(6)-octanoyl-L-lysyl-[protein] + holo-[ACP] + H(+). The protein operates within protein modification; protein lipoylation via endogenous pathway; protein N(6)-(lipoyl)lysine from octanoyl-[acyl-carrier-protein]: step 1/2. Functionally, catalyzes the transfer of endogenously produced octanoic acid from octanoyl-acyl-carrier-protein onto the lipoyl domains of lipoate-dependent enzymes. Lipoyl-ACP can also act as a substrate although octanoyl-ACP is likely to be the physiological substrate. In Streptomyces coelicolor (strain ATCC BAA-471 / A3(2) / M145), this protein is Octanoyltransferase.